A 367-amino-acid chain; its full sequence is Polyenoic acids biosynthesis gene cluster protein Ba17b (367 aa).

3 helical membrane passes run 16 to 36, 50 to 70, and 90 to 110; these read LEVF…LRFY, WLII…IGAV, and LVAF…TEGL. N-linked (GlcNAc...) asparagine glycosylation is present at Asn133. Transmembrane regions (helical) follow at residues 137–157, 183–203, and 211–231; these read LVLV…CTPF, FPNI…VWGL, and LVLV…GGDS. Asn245 is a glycosylation site (N-linked (GlcNAc...) asparagine). A helical membrane pass occupies residues 259–279; sequence LIIWTVCEPGVYLIAACLLVY.

The protein belongs to the SAT4 family.

The protein localises to the membrane. The protein operates within secondary metabolite biosynthesis. Part of the gene cluster that mediates the biosynthesis of (2Z,4E,6E,10E)-9-hydroxydodeca-2,4,6,10-tetraenoic acid (BAA), (2E,4E,6E,10E)-9-hydroxydodeca-2,4,6,10-tetraenoic acid (BAB), and (2Z,4E,6E)-octa-2,4,6-trienedioic acid (PBA). The highly reducing polyketide synthase Ba17a is sufficent to produce PBA and BAA. The still to be characterized protein Ba17b leads to an increased production of BAA as well as to the production of the new compound BAB. BAA does not possess insecticidal activity against G.mellonella larvae, however, both BAA and BAB increase the growth of Candida albicans and BAA can mitigate the fungicidal effects of fluconazole over C.albicans, suggesting that generalist pathogens such as M.anisopliae, can potentially manipulate the yeast microbiota found in arthropods (and anywhere else) by the activity of compounds as BAA and BAB. In Metarhizium anisopliae (Entomophthora anisopliae), this protein is Polyenoic acids biosynthesis gene cluster protein Ba17b.